Here is a 208-residue protein sequence, read N- to C-terminus: Ras-related protein Rab-6A (208 aa).

Ser-2 is subject to N-acetylserine. The GTP site is built by Ser-23, Val-24, Gly-25, Lys-26, Thr-27, Ser-28, Asp-39, Asn-40, Tyr-42, and Thr-45. Mg(2+) is bound at residue Thr-27. The Switch 1 signature appears at Arg-32–Phe-50. Residues Thr-45 and Asp-68 each contribute to the Mg(2+) site. Positions Thr-69–Ala-88 match the Switch 2 motif. Positions 71, 126, 127, 129, 156, 157, and 158 each coordinate GTP. 2 S-geranylgeranyl cysteine lipidation sites follow: Cys-206 and Cys-208. Cysteine methyl ester is present on Cys-208.

Belongs to the small GTPase superfamily. Rab family. The cofactor is Mg(2+).

Its subcellular location is the golgi apparatus membrane. It catalyses the reaction GTP + H2O = GDP + phosphate + H(+). With respect to regulation, regulated by guanine nucleotide exchange factors (GEFs) which promote the exchange of bound GDP for free GTP. Regulated by GTPase activating proteins (GAPs) which increase the GTP hydrolysis activity. Inhibited by GDP dissociation inhibitors (GDIs). Its function is as follows. The small GTPases Rab are key regulators of intracellular membrane trafficking, from the formation of transport vesicles to their fusion with membranes. Rabs cycle between an inactive GDP-bound form and an active GTP-bound form that is able to recruit to membranes different sets of downstream effectors directly responsible for vesicle formation, movement, tethering and fusion. RAB6A acts as a regulator of COPI-independent retrograde transport from the Golgi apparatus towards the endoplasmic reticulum (ER). This Gallus gallus (Chicken) protein is Ras-related protein Rab-6A (RAB6A).